The chain runs to 424 residues: Histidine--tRNA ligase (424 aa).

Belongs to the class-II aminoacyl-tRNA synthetase family. In terms of assembly, homodimer.

Its subcellular location is the cytoplasm. The enzyme catalyses tRNA(His) + L-histidine + ATP = L-histidyl-tRNA(His) + AMP + diphosphate + H(+). This is Histidine--tRNA ligase from Yersinia pestis bv. Antiqua (strain Antiqua).